We begin with the raw amino-acid sequence, 307 residues long: Small ribosomal subunit biogenesis GTPase RsgA (307 aa).

Residues 1-21 are disordered; that stretch reads MPSEHPFSDGIPTPNPKETMN. The CP-type G domain occupies 85 to 242; that stretch reads RQDAWKTKLI…LIDSPGLQEF (158 aa). GTP contacts are provided by residues 135–138 and 184–192; these read NKAD and GQSGMGKST. Zn(2+) contacts are provided by C266, C271, H273, and C279.

Belongs to the TRAFAC class YlqF/YawG GTPase family. RsgA subfamily. As to quaternary structure, monomer. Associates with 30S ribosomal subunit, binds 16S rRNA. Requires Zn(2+) as cofactor.

It is found in the cytoplasm. Functionally, one of several proteins that assist in the late maturation steps of the functional core of the 30S ribosomal subunit. Helps release RbfA from mature subunits. May play a role in the assembly of ribosomal proteins into the subunit. Circularly permuted GTPase that catalyzes slow GTP hydrolysis, GTPase activity is stimulated by the 30S ribosomal subunit. The protein is Small ribosomal subunit biogenesis GTPase RsgA of Neisseria meningitidis serogroup B (strain ATCC BAA-335 / MC58).